Here is a 379-residue protein sequence, read N- to C-terminus: Leukocyte elastase inhibitor (379 aa).

Met1 bears the N-acetylmethionine mark. Lys137 and Lys177 each carry N6-acetyllysine. The CARD-binding motif (CBM) stretch occupies residues 351–379 (NFNADHPFIFFIRHNPSANILFLGRFSSP).

Belongs to the serpin family. Ov-serpin subfamily. As to quaternary structure, monomer. Interacts (via C-terminus) with CASP1; CASP4 (via CARD domain) and CASP5; these interactions regulate the activity of inflammatory caspases. Interacts with PRTN3. Interacts with GZMH. Interacts with TMSB4. Post-translationally, the N-terminus is blocked.

The protein localises to the secreted. The protein resides in the cytoplasm. It localises to the cytolytic granule. Its subcellular location is the early endosome. In terms of biological role, neutrophil serine protease inhibitor that plays an essential role in the regulation of the innate immune response, inflammation and cellular homeostasis. Acts primarily to protect the cell from proteases released in the cytoplasm during stress or infection. These proteases are important in killing microbes but when released from granules, these potent enzymes also destroy host proteins and contribute to mortality. Regulates the activity of the neutrophil proteases elastase, cathepsin G, proteinase-3, chymase, chymotrypsin, and kallikrein-3. Also acts as a potent intracellular inhibitor of GZMH by directly blocking its proteolytic activity. During inflammation, limits the activity of inflammatory caspases CASP1, CASP4 and CASP5 by suppressing their caspase-recruitment domain (CARD) oligomerization and enzymatic activation. When secreted, promotes the proliferation of beta-cells via its protease inhibitory function. The chain is Leukocyte elastase inhibitor (SERPINB1) from Equus caballus (Horse).